We begin with the raw amino-acid sequence, 157 residues long: UPF0225 protein PSPPH_1399 (157 aa).

The protein belongs to the UPF0225 family.

The sequence is that of UPF0225 protein PSPPH_1399 from Pseudomonas savastanoi pv. phaseolicola (strain 1448A / Race 6) (Pseudomonas syringae pv. phaseolicola (strain 1448A / Race 6)).